The chain runs to 1595 residues: MGVPTKISILGRESIVADFGIWRNYVAKDLLSSCSSSTYILISDTNLTPLYLEGFQRSFEDAATNVSPKPRLLTYEIPPGESSKSRETKADIEDWMLARQPPCGRDTVIIALGGGVIGDLIGFVAATYMRGVRFVQVPTTLLAMVDSSIGGKTAIDTPNGKNLIGAIWQPQRIYLDMEFLNTLPEREFINGMAEVIKTAAISSDEKFAALERDAETILAAVKSKNTPERPRFSGIEETLKRTILSSAEFKAQVVSADEREGGLRNLLNFGHSIGHAIEAILAPQVLHGECVSIGMVKEAELARHLGILNNVSVSRISKCLASYGLPTSLKDQRIKKLTAGKHCSVEQLIAYMGVDKKNDGPKKKVVLLSAIGRTHEPRASTVSNEEIQIVLAPSIEVSPGVPKGLDVTCTPPGSKSISNRALVLAALGSGTCRLKNLLHSDDTEVMLNALERLGAATFSWEDEGEVLVVSGKGGRMEASPSELYLGNAGTASRFLTTVATLARKSSVDSSVLTGNARMKQRPIGDLVDALAANGASIEYLENLGCLPLKIASSGGFAGGEINLAAKVSSQYVSSLLMCAPYAKTPVTLRLVGGKPISQPYIDMTTAMMRSFGVEVKKSETEEHTYHIPLGFYTNPVEYIVESDASSATYPLAAAAITGTSCTVPNIGSKSLQGDARFAVDVLRPMGCAVDQSDFSTRVTGPPGGILSPLPNIDMEPMTDAFLTASVLAAVARGKGSNHTTRIFGIANQRVKECNRIKAMKDELAEFGVVCREHDDGLEIDGIDRATLHHPSDGVYCYDDHRVAMSFSVLSLVTPEPTLILEKECVGKTWPGWWDSLAQTFKVKLDGKEVGKRTETNPIVHVNKSAASIFIIGMRGAGKTTSGFWVSKALQRPFIDLDDELERTEGMTIPEIIKQRGWGGFREAELSLLRRVMTEKPTGYIFACGGGVVETPEARKLLTQYHKTTGNVILVMRDIKEIMDFLKIDKTRPAYVEDMMSVWLRRKPWYEECSNVQYYSRLTGLDGMTQVSGGFNRFLKVITGEVDSLAKMRRKENTFFVSLTLPDLSLAAHILKEVTLGSDAVELRVDLLKDPQSDNEIPSVDYVAEQISVLRSRTSVPLVFTIRTKGQGGRFPDDAYDAALQLYRLAVRMGSEFVDLEISFPEQLLRTVTEMKGFSKIITSHHDPKGQLSWVNGSWIQFYNKALQYGDVIKLVGVARSIDDNISLKKFKTWAEEKHNVPIIAINMGDKGQLSRMLNGFMTPVSHPSLPFKAAPGQLSAREIRKGLSLIGEIKAKKFAVIGNPVSASRSPAMHNTLFRQMGLPHTYGTLETDNPEVAKEFIRSPGFGGASVTIPLKISIMPLLDEIAPEAMSIGAVNTIVCAPPAPDGKSQTPRLIGHNTDWQGMVRCLSDAGAYAAATPTTASAGLVIGGGGTARAAIFALQNMGYSPIYVLGRSPDKLSSMTSTFHTDHDIRILEDVKALESLPTVAIGTIPGDKPIEPHMREILCRLFDLCEKANSDTEQARGVSTKRILLEMAYKPSVTSLMQLASDSGWTVLPGLEALVAQGVYQCEYWTNITPVYEYARNAVMGVSPSEDIL.

Residues 1 to 384 (MGVPTKISIL…HEPRASTVSN (384 aa)) are 3-dehydroquinate synthase. NAD(+) is bound by residues 44–46 (DTN), 81–84 (ESSK), 114–116 (GGV), and D119. R130 is a 7-phospho-2-dehydro-3-deoxy-D-arabino-heptonate binding site. Residue 139–140 (TT) participates in NAD(+) binding. The 7-phospho-2-dehydro-3-deoxy-D-arabino-heptonate site is built by D146 and K152. K161 serves as a coordination point for NAD(+). N162 serves as a coordination point for 7-phospho-2-dehydro-3-deoxy-D-arabino-heptonate. NAD(+)-binding positions include 179–182 (FLNT) and N190. E194 contacts Zn(2+). Residues 194-197 (EVIK) and K250 contribute to the 7-phospho-2-dehydro-3-deoxy-D-arabino-heptonate site. The active-site Proton acceptor; for 3-dehydroquinate synthase activity is the E260. Residues 264-268 (RNLLN) and H271 each bind 7-phospho-2-dehydro-3-deoxy-D-arabino-heptonate. Residue H271 participates in Zn(2+) binding. The active-site Proton acceptor; for 3-dehydroquinate synthase activity is H275. H287 and K356 together coordinate 7-phospho-2-dehydro-3-deoxy-D-arabino-heptonate. H287 is a Zn(2+) binding site. Positions 397–842 (VSPGVPKGLD…WDSLAQTFKV (446 aa)) are EPSP synthase. Residue C824 is the For EPSP synthase activity of the active site. The segment at 866-1057 (ASIFIIGMRG…RRKENTFFVS (192 aa)) is shikimate kinase. 872–879 (GMRGAGKT) serves as a coordination point for ATP. The interval 1058 to 1278 (LTLPDLSLAA…AAPGQLSARE (221 aa)) is 3-dehydroquinase. Catalysis depends on H1181, which acts as the Proton acceptor; for 3-dehydroquinate dehydratase activity. K1209 (schiff-base intermediate with substrate; for 3-dehydroquinate dehydratase activity) is an active-site residue. The interval 1291 to 1595 (AKKFAVIGNP…MGVSPSEDIL (305 aa)) is shikimate dehydrogenase.

It in the N-terminal section; belongs to the sugar phosphate cyclases superfamily. Dehydroquinate synthase family. The protein in the 2nd section; belongs to the EPSP synthase family. In the 3rd section; belongs to the shikimate kinase family. This sequence in the 4th section; belongs to the type-I 3-dehydroquinase family. It in the C-terminal section; belongs to the shikimate dehydrogenase family. Homodimer. It depends on Zn(2+) as a cofactor.

The protein resides in the cytoplasm. It carries out the reaction 7-phospho-2-dehydro-3-deoxy-D-arabino-heptonate = 3-dehydroquinate + phosphate. It catalyses the reaction 3-dehydroquinate = 3-dehydroshikimate + H2O. The catalysed reaction is shikimate + NADP(+) = 3-dehydroshikimate + NADPH + H(+). The enzyme catalyses shikimate + ATP = 3-phosphoshikimate + ADP + H(+). It carries out the reaction 3-phosphoshikimate + phosphoenolpyruvate = 5-O-(1-carboxyvinyl)-3-phosphoshikimate + phosphate. Its pathway is metabolic intermediate biosynthesis; chorismate biosynthesis; chorismate from D-erythrose 4-phosphate and phosphoenolpyruvate: step 2/7. It functions in the pathway metabolic intermediate biosynthesis; chorismate biosynthesis; chorismate from D-erythrose 4-phosphate and phosphoenolpyruvate: step 3/7. The protein operates within metabolic intermediate biosynthesis; chorismate biosynthesis; chorismate from D-erythrose 4-phosphate and phosphoenolpyruvate: step 4/7. It participates in metabolic intermediate biosynthesis; chorismate biosynthesis; chorismate from D-erythrose 4-phosphate and phosphoenolpyruvate: step 5/7. Its pathway is metabolic intermediate biosynthesis; chorismate biosynthesis; chorismate from D-erythrose 4-phosphate and phosphoenolpyruvate: step 6/7. The AROM polypeptide catalyzes 5 consecutive enzymatic reactions in prechorismate polyaromatic amino acid biosynthesis. This is Pentafunctional AROM polypeptide from Ajellomyces capsulatus (strain G186AR / H82 / ATCC MYA-2454 / RMSCC 2432) (Darling's disease fungus).